A 263-amino-acid chain; its full sequence is uncharacterized protein (263 aa).

This is an uncharacterized protein from Bacillus subtilis (strain 168).